Consider the following 142-residue polypeptide: Small ribosomal subunit protein uS12 (142 aa).

The protein belongs to the universal ribosomal protein uS12 family. In terms of assembly, part of the 30S ribosomal subunit.

Functionally, with S4 and S5 plays an important role in translational accuracy. Located at the interface of the 30S and 50S subunits. The chain is Small ribosomal subunit protein uS12 from Methanoculleus marisnigri (strain ATCC 35101 / DSM 1498 / JR1).